Reading from the N-terminus, the 207-residue chain is Urease accessory protein UreG (207 aa).

GTP is bound at residue 12 to 19 (GPVGAGKT).

This sequence belongs to the SIMIBI class G3E GTPase family. UreG subfamily. In terms of assembly, homodimer. UreD, UreF and UreG form a complex that acts as a GTP-hydrolysis-dependent molecular chaperone, activating the urease apoprotein by helping to assemble the nickel containing metallocenter of UreC. The UreE protein probably delivers the nickel.

It localises to the cytoplasm. In terms of biological role, facilitates the functional incorporation of the urease nickel metallocenter. This process requires GTP hydrolysis, probably effectuated by UreG. The chain is Urease accessory protein UreG from Cereibacter sphaeroides (strain ATCC 17023 / DSM 158 / JCM 6121 / CCUG 31486 / LMG 2827 / NBRC 12203 / NCIMB 8253 / ATH 2.4.1.) (Rhodobacter sphaeroides).